Consider the following 398-residue polypeptide: Growth-regulating factor 3 (398 aa).

The span at 1–17 shows a compositional bias: low complexity; sequence MDLQLKQWRSQQQQQHQ. A disordered region spans residues 1–32; it reads MDLQLKQWRSQQQQQHQTESEEQPSAAKIPKH. The region spanning 76–111 is the QLQ domain; that stretch reads FFSWAQWQELELQALIYRYMLAGAAVPQELLLPIKK. The WRC domain maps to 144–188; sequence DPEPGRCRRTDGKKWRCSRDVFAGHKYCERHMHRGRNRSRKPVET. 2 consecutive short sequence motifs (bipartite nuclear localization signal) follow at residues 149-159 and 177-184; these read RCRRTDGKKWR and RGRNRSRK. Polar residues-rich tracts occupy residues 299 to 350 and 383 to 398; these read SLQE…RDQQ and PTSVLHQLGVSTQAFH. Positions 299-398 are disordered; that stretch reads SLQEADNSSS…QLGVSTQAFH (100 aa).

Belongs to the GRF family. In terms of tissue distribution, strongly expressed in actively growing and developing tissues, such as roots, upper stems, and shoot tips containing the shoot apical meristem (SAM) and flower buds. Also expressed in mature flowers, but weakly expressed in mature stems and leaves.

Its subcellular location is the nucleus. Its function is as follows. Transcription activator that plays a role in the regulation of cell expansion in leaf and cotyledons tissues. Component of a network formed by miR396, the GRFs and their interacting factors (GIFs) acting in the regulation of meristem function, at least partially through the control of cell proliferation. microRNA396-GRF1/GRF3 regulatory module acts as a developmental regulator in the reprogramming of root cells during cyst nematode infection, leading to the formation of the syncytium. The sequence is that of Growth-regulating factor 3 (GRF3) from Arabidopsis thaliana (Mouse-ear cress).